Here is a 273-residue protein sequence, read N- to C-terminus: MATDHAAPTASEYIVHHLGHFSTKHQDKIVDFSIINMDTIFWSIFAGVVGCLFMYLAARKATSGVPGRFQAAVEMIVEMVDNQAKSIVHGDRTFIAPLALTVFVWVALMNSLDFLPVDMFSAFFHAVGLDSLITHHRVVPTADLNGTMGIALGVFALMIFYNIKIKGAGGFVHELFAAPFGIWLAPFNLLLNMIEFAAKTVSLAMRLFGNMYAGELLFLLIALLGSTATAFGFFGHVVAGTLWAIFHILIVFLQAFIFMMLTLVYIGQAHESH.

Helical transmembrane passes span I34 to M54, F94 to F114, L115 to H135, D143 to I163, F171 to L191, F218 to V238, and A244 to V264.

The protein belongs to the ATPase A chain family. In terms of assembly, F-type ATPases have 2 components, CF(1) - the catalytic core - and CF(0) - the membrane proton channel. CF(1) has five subunits: alpha(3), beta(3), gamma(1), delta(1), epsilon(1). CF(0) has three main subunits: a(1), b(2) and c(9-12). The alpha and beta chains form an alternating ring which encloses part of the gamma chain. CF(1) is attached to CF(0) by a central stalk formed by the gamma and epsilon chains, while a peripheral stalk is formed by the delta and b chains.

The protein localises to the cell inner membrane. Its function is as follows. Key component of the proton channel; it plays a direct role in the translocation of protons across the membrane. The protein is ATP synthase subunit a of Janthinobacterium sp. (strain Marseille) (Minibacterium massiliensis).